The chain runs to 197 residues: Putative manganese efflux pump MntP (197 aa).

The next 6 helical transmembrane spans lie at 8–28, 43–63, 66–86, 123–143, 146–166, and 177–197; these read VILL…GLGA, VYAA…GYLL, VLLG…LIVL, LAIA…LLAL, WLAC…GIYL, and KAEI…MLFS.

This sequence belongs to the MntP (TC 9.B.29) family.

Its subcellular location is the cell inner membrane. Its function is as follows. Probably functions as a manganese efflux pump. The sequence is that of Putative manganese efflux pump MntP from Psychrobacter arcticus (strain DSM 17307 / VKM B-2377 / 273-4).